The primary structure comprises 503 residues: Arginyl-tRNA--protein transferase 1 (503 aa).

Belongs to the R-transferase family.

The protein localises to the cytoplasm. It carries out the reaction an N-terminal L-alpha-aminoacyl-[protein] + L-arginyl-tRNA(Arg) = an N-terminal L-arginyl-L-aminoacyl-[protein] + tRNA(Arg) + H(+). Involved in the post-translational conjugation of arginine to the N-terminal aspartate or glutamate of a protein. This arginylation is required for degradation of the protein via the ubiquitin pathway. Does not arginylate cysteine residues. The chain is Arginyl-tRNA--protein transferase 1 (ATE1) from Saccharomyces cerevisiae (strain ATCC 204508 / S288c) (Baker's yeast).